The following is a 1103-amino-acid chain: MAPACQILRWALALGLGLMFEVTHAFRSQDEFLSSLESYEIAFPTRVDHNGALLAFSPPPPRRQRRGTGATAESRLFYKVASPSTHFLLNLTRSSRLLAGHVSVEYWTREGLAWQRAARPHCLYAGHLQGQASTSHVAISTCGGLHGLIVADEEEYLIEPLHGGPKGSRSPEESGPHVVYKRSSLRHPHLDTACGVRDEKPWKGRPWWLRTLKPPPARPLGNETERGQPGLKRSVSRERYVETLVVADKMMVAYHGRRDVEQYVLAIMNIVAKLFQDSSLGSTVNILVTRLILLTEDQPTLEITHHAGKSLDSFCKWQKSIVNHSGHGNAIPENGVANHDTAVLITRYDICIYKNKPCGTLGLAPVGGMCERERSCSVNEDIGLATAFTIAHEIGHTFGMNHDGVGNSCGARGQDPAKLMAAHITMKTNPFVWSSCSRDYITSFLDSGLGLCLNNRPPRQDFVYPTVAPGQAYDADEQCRFQHGVKSRQCKYGEVCSELWCLSKSNRCITNSIPAAEGTLCQTHTIDKGWCYKRVCVPFGSRPEGVDGAWGPWTPWGDCSRTCGGGVSSSSRHCDSPRPTIGGKYCLGERRRHRSCNTDDCPPGSQDFREVQCSEFDSIPFRGKFYKWKTYRGGGVKACSLTCLAEGFNFYTERAAAVVDGTPCRPDTVDICVSGECKHVGCDRVLGSDLREDKCRVCGGDGSACETIEGVFSPASPGAGYEDVVWIPKGSVHIFIQDLNLSLSHLALKGDQESLLLEGLPGTPQPHRLPLAGTTFQLRQGPDQVQSLEALGPINASLIVMVLARTELPALRYRFNAPIARDSLPPYSWHYAPWTKCSAQCAGGSQVQAVECRNQLDSSAVAPHYCSAHSKLPKRQRACNTEPCPPDWVVGNWSLCSRSCDAGVRSRSVVCQRRVSAAEEKALDDSACPQPRPPVLEACHGPTCPPEWAALDWSECTPSCGPGLRHRVVLCKSADHRATLPPAHCSPAAKPPATMRCNLRRCPPARWVAGEWGECSAQCGVGQRQRSVRCTSHTGQASHECTEALRPPTTQQCEAKCDSPTPGDGPEECKDVNKVAYCPLVLKFQFCSRAYFRQMCCKTCHGH.

The signal sequence occupies residues 1 to 25 (MAPACQILRWALALGLGLMFEVTHA). The propeptide occupies 26-233 (FRSQDEFLSS…TERGQPGLKR (208 aa)). N-linked (GlcNAc...) asparagine glycans are attached at residues N90, N222, and N323. The disordered stretch occupies residues 213 to 233 (KPPPARPLGNETERGQPGLKR). Residues 239–457 (RYVETLVVAD…GLGLCLNNRP (219 aa)) form the Peptidase M12B domain. Intrachain disulfides connect C315/C376, C351/C358, C370/C452, C409/C436, C479/C501, C490/C508, C496/C531, C521/C536, C559/C596, C563/C601, and C574/C586. H392 contributes to the Zn(2+) binding site. The active site involves E393. H396 and H402 together coordinate Zn(2+). One can recognise a Disintegrin domain in the interval 460 to 546 (QDFVYPTVAP…VPFGSRPEGV (87 aa)). The 56-residue stretch at 547-602 (DGAWGPWTPWGDCSRTCGGGVSSSSRHCDSPRPTIGGKYCLGERRRHRSCNTDDCP) folds into the TSP type-1 1 domain. The spacer stretch occupies residues 706-828 (ETIEGVFSPA…IARDSLPPYS (123 aa)). N-linked (GlcNAc...) asparagine glycans are attached at residues N740 and N795. TSP type-1 domains lie at 825–883 (PPYS…NTEP), 884–945 (CPPD…PTCP), 947–1001 (EWAA…NLRR), and 1003–1058 (PPAR…AKCD). N-linked (GlcNAc...) asparagine glycosylation occurs at N892. Residues 1065-1103 (GPEECKDVNKVAYCPLVLKFQFCSRAYFRQMCCKTCHGH) enclose the PLAC domain.

In terms of assembly, interacts with FBN1; this interaction promotes microfibrils assembly. Requires Zn(2+) as cofactor. Glycosylated. Can be O-fucosylated by POFUT2 on a serine or a threonine residue found within the consensus sequence C1-X(2)-(S/T)-C2-G of the TSP type-1 repeat domains where C1 and C2 are the first and second cysteine residue of the repeat, respectively. Fucosylated repeats can then be further glycosylated by the addition of a beta-1,3-glucose residue by the glucosyltransferase, B3GALTL. Fucosylation mediates the efficient secretion of ADAMTS family members. Can also be C-glycosylated with one or two mannose molecules on tryptophan residues within the consensus sequence W-X-X-W of the TPRs, and N-glycosylated. These other glycosylations can also facilitate secretion. In terms of tissue distribution, widely expressed in adult tissues.

The protein resides in the secreted. It is found in the extracellular space. Its subcellular location is the extracellular matrix. In terms of biological role, metalloprotease that participate in microfibrils assembly. Microfibrils are extracellular matrix components occurring independently or along with elastin in the formation of elastic tissues. The polypeptide is A disintegrin and metalloproteinase with thrombospondin motifs 10 (ADAMTS10) (Homo sapiens (Human)).